The primary structure comprises 240 residues: Proteasome subunit alpha (240 aa).

This sequence belongs to the peptidase T1A family. As to quaternary structure, the 20S proteasome core is composed of 14 alpha and 14 beta subunits that assemble into four stacked heptameric rings, resulting in a barrel-shaped structure. The two inner rings, each composed of seven catalytic beta subunits, are sandwiched by two outer rings, each composed of seven alpha subunits. The catalytic chamber with the active sites is on the inside of the barrel. Has a gated structure, the ends of the cylinder being occluded by the N-termini of the alpha-subunits. Is capped at one or both ends by the proteasome regulatory ATPase, PAN.

It localises to the cytoplasm. With respect to regulation, the formation of the proteasomal ATPase PAN-20S proteasome complex, via the docking of the C-termini of PAN into the intersubunit pockets in the alpha-rings, triggers opening of the gate for substrate entry. Interconversion between the open-gate and close-gate conformations leads to a dynamic regulation of the 20S proteasome proteolysis activity. Functionally, component of the proteasome core, a large protease complex with broad specificity involved in protein degradation. The protein is Proteasome subunit alpha of Methanoculleus marisnigri (strain ATCC 35101 / DSM 1498 / JR1).